The following is a 602-amino-acid chain: Sodium- and chloride-dependent GABA transporter 2 (602 aa).

Over 1 to 40 the chain is Cytoplasmic; the sequence is MDNRVSGTTSNGETKPVCPVMEKVEEDGTLEREQWTNKME. Transmembrane regions (helical) follow at residues 41-61, 68-88, and 121-141; these read FVLSVAGEIIGLGNVWRFPYL, GAFFIPYLIFLFTCGIPVFFL, and IVSLLNVYYIVVLAWALFYLF. At 142–206 the chain is on the extracellular side; the sequence is SSFTTDLPWG…GIQHLGSLRW (65 aa). An intrachain disulfide couples Cys153 to Cys162. N-linked (GlcNAc...) asparagine glycosylation is found at Asn169, Asn173, and Asn178. Helical transmembrane passes span 207–227 and 233–253; these read ELVLCLLLAWIICYFCIWKGV and VVYFTATFPYLMLVVLLIRGV. Residue Asn269 is glycosylated (N-linked (GlcNAc...) asparagine). A run of 7 helical transmembrane segments spans residues 282–302, 319–339, 366–386, 418–438, 453–473, 490–510, and 528–548; these read AGTQIFFSFAICLGCLTALGS, ILNSSTSFVAGFAIFSILGFM, VVMLPFSPLWACCFFFMVVLL, ILILIVSVVSFFIGLIMLTEG, GMCLLFVAIFESLCVAWVYGA, PLIKYCWLFFTPAVCLATFLF, and WWGDALGWLLALSSMVCIPAW. At 549-602 the chain is on the cytoplasmic side; that stretch reads SIYKLRTLKGPLRERLRQLVCPAEDLPQKSQPELTSPATPMTSLLRLTELESNC. Phosphothreonine is present on Thr587. Ser591 is modified (phosphoserine).

It belongs to the sodium:neurotransmitter symporter (SNF) (TC 2.A.22) family. SLC6A13 subfamily. In terms of tissue distribution, brain, retina, and peripheral tissues. Expressed in hepatocytes (at protein level).

Its subcellular location is the cell membrane. It localises to the basolateral cell membrane. It carries out the reaction 4-aminobutanoate(out) + chloride(out) + 2 Na(+)(out) = 4-aminobutanoate(in) + chloride(in) + 2 Na(+)(in). The enzyme catalyses taurine(out) + chloride(out) + 2 Na(+)(out) = taurine(in) + chloride(in) + 2 Na(+)(in). It catalyses the reaction beta-alanine(out) + chloride(out) + 2 Na(+)(out) = beta-alanine(in) + chloride(in) + 2 Na(+)(in). The catalysed reaction is hypotaurine(out) + chloride(out) + 2 Na(+)(out) = hypotaurine(in) + chloride(in) + 2 Na(+)(in). Its activity is regulated as follows. GABA transport is inhibited by beta-alanine, L-2,4-Diaminobutyric acid, hypotaurine and nipecotic acid. Taurine transport is inhibited by hypotaurine, beta-alanine and nipecotic acid. Functionally, mediates sodium- and chloride-dependent transport of gamma-aminobutyric acid (GABA). Mediates transport of taurine and is the major taurine transporter in hepatocytes. Can also mediate transport of beta-alanine and hypotaurine. This Rattus norvegicus (Rat) protein is Sodium- and chloride-dependent GABA transporter 2 (Slc6a13).